The chain runs to 304 residues: MATLREIRTRIKSVKSTQQLTKAMKMVAAAKLRRAQDRALQARPYAAKLKELLDSLSGKVDTTINPLLTPRSEVKNVLVILVTSDRGLCGAFNTNIIKMAQRLIDQDYADMSRQGRVKMICAGRRGNDFFRKRGYNVVYGYPNIFNQLDFNAAKEIVEKATELYLSGEVDKVHVIYNEFKNVVSPNLISEVFLPIAPSKKDDAGSDAARQNKLVPIVDYIYEPSPEAIINELVPKHLNTQLWRVLLESNAAEQASRMTAMDSATDNAKELLRSLSITYNRARQAAITKEILEIVGGANALEQSA.

This sequence belongs to the ATPase gamma chain family. In terms of assembly, F-type ATPases have 2 components, CF(1) - the catalytic core - and CF(0) - the membrane proton channel. CF(1) has five subunits: alpha(3), beta(3), gamma(1), delta(1), epsilon(1). CF(0) has three main subunits: a, b and c.

It localises to the cell membrane. Its function is as follows. Produces ATP from ADP in the presence of a proton gradient across the membrane. The gamma chain is believed to be important in regulating ATPase activity and the flow of protons through the CF(0) complex. This Chloroherpeton thalassium (strain ATCC 35110 / GB-78) protein is ATP synthase gamma chain.